The following is a 91-amino-acid chain: Cytochrome b-c1 complex subunit 6, mitochondrial (91 aa).

Residues 1-13 (MGLEDEQKMLTES) constitute a mitochondrion transit peptide. The tract at residues 1 to 30 (MGLEDEQKMLTESGDPEEEEEEEEELVDPL) is disordered. The segment covering 14–27 (GDPEEEEEEEEELV) has biased composition (acidic residues). 2 disulfide bridges follow: C37–C81 and C53–C67. An N6-acetyllysine modification is found at K42. The residue at position 85 (K85) is an N6-acetyllysine.

It belongs to the UQCRH/QCR6 family. In terms of assembly, component of the ubiquinol-cytochrome c oxidoreductase (cytochrome b-c1 complex, complex III, CIII), a multisubunit enzyme composed of 11 subunits. The complex is composed of 3 respiratory subunits cytochrome b, cytochrome c1 and Rieske protein UQCRFS1, 2 core protein subunits UQCRC1/QCR1 and UQCRC2/QCR2, and 6 low-molecular weight protein subunits UQCRH/QCR6, UQCRB/QCR7, UQCRQ/QCR8, UQCR10/QCR9, UQCR11/QCR10 and subunit 9, the cleavage product of Rieske protein UQCRFS1. The complex exists as an obligatory dimer and forms supercomplexes (SCs) in the inner mitochondrial membrane with NADH-ubiquinone oxidoreductase (complex I, CI) and cytochrome c oxidase (complex IV, CIV), resulting in different assemblies (supercomplex SCI(1)III(2)IV(1) and megacomplex MCI(2)III(2)IV(2)).

It is found in the mitochondrion inner membrane. Component of the ubiquinol-cytochrome c oxidoreductase, a multisubunit transmembrane complex that is part of the mitochondrial electron transport chain which drives oxidative phosphorylation. The respiratory chain contains 3 multisubunit complexes succinate dehydrogenase (complex II, CII), ubiquinol-cytochrome c oxidoreductase (cytochrome b-c1 complex, complex III, CIII) and cytochrome c oxidase (complex IV, CIV), that cooperate to transfer electrons derived from NADH and succinate to molecular oxygen, creating an electrochemical gradient over the inner membrane that drives transmembrane transport and the ATP synthase. The cytochrome b-c1 complex catalyzes electron transfer from ubiquinol to cytochrome c, linking this redox reaction to translocation of protons across the mitochondrial inner membrane, with protons being carried across the membrane as hydrogens on the quinol. In the process called Q cycle, 2 protons are consumed from the matrix, 4 protons are released into the intermembrane space and 2 electrons are passed to cytochrome c. The polypeptide is Cytochrome b-c1 complex subunit 6, mitochondrial (UQCRH) (Homo sapiens (Human)).